The primary structure comprises 563 residues: Arginine--tRNA ligase (563 aa).

The short motif at 122–132 is the 'HIGH' region element; it reads PNIAKPMSMGH.

Belongs to the class-I aminoacyl-tRNA synthetase family. Monomer.

The protein localises to the cytoplasm. The catalysed reaction is tRNA(Arg) + L-arginine + ATP = L-arginyl-tRNA(Arg) + AMP + diphosphate. This Ligilactobacillus salivarius (strain UCC118) (Lactobacillus salivarius) protein is Arginine--tRNA ligase.